A 122-amino-acid chain; its full sequence is Large ribosomal subunit protein uL14 (122 aa).

The protein belongs to the universal ribosomal protein uL14 family. In terms of assembly, part of the 50S ribosomal subunit. Forms a cluster with proteins L3 and L19. In the 70S ribosome, L14 and L19 interact and together make contacts with the 16S rRNA in bridges B5 and B8.

Functionally, binds to 23S rRNA. Forms part of two intersubunit bridges in the 70S ribosome. This is Large ribosomal subunit protein uL14 from Campylobacter concisus (strain 13826).